The primary structure comprises 123 residues: WAP four-disulfide core domain protein 5 (123 aa).

A signal peptide spans 1 to 24 (MRIQSLLLLGVLLAVGSQLPAAFG). 2 WAP domains span residues 27-73 (KGEK…CVPR) and 74-121 (ISVK…RDPA). Disulfide bonds link C34–C62, C41–C66, C49–C61, C55–C70, C81–C109, C88–C113, C96–C108, and C102–C117.

It is found in the secreted. Its function is as follows. Putative acid-stable proteinase inhibitor. This chain is WAP four-disulfide core domain protein 5 (WFDC5), found in Callithrix jacchus (White-tufted-ear marmoset).